The chain runs to 227 residues: Ribonuclease 3 (227 aa).

The 130-residue stretch at Phe4–Asn133 folds into the RNase III domain. Glu46 is a binding site for Mg(2+). Asp50 is a catalytic residue. Mg(2+)-binding residues include Asn119 and Glu122. Residue Glu122 is part of the active site. Positions Asp158–Asp226 constitute a DRBM domain.

The protein belongs to the ribonuclease III family. As to quaternary structure, homodimer. Mg(2+) serves as cofactor.

Its subcellular location is the cytoplasm. The enzyme catalyses Endonucleolytic cleavage to 5'-phosphomonoester.. Digests double-stranded RNA. Involved in the processing of primary rRNA transcript to yield the immediate precursors to the large and small rRNAs (23S and 16S). Processes some mRNAs, and tRNAs when they are encoded in the rRNA operon. Processes pre-crRNA and tracrRNA of type II CRISPR loci if present in the organism. This Rickettsia akari (strain Hartford) protein is Ribonuclease 3.